A 378-amino-acid polypeptide reads, in one-letter code: Neutral protease 2 homolog ARB_04336 (378 aa).

The signal sequence occupies residues 1–19; it reads MKFFTALAAVGALLAPAVA. Residues 20–186 constitute a propeptide that is removed on maturation; sequence LPTPASEASH…DYFSKGLDKR (167 aa). Intrachain disulfides connect Cys-192–Cys-262 and Cys-269–Cys-287. His-311 is a Zn(2+) binding site. Glu-312 is a catalytic residue. Zn(2+)-binding residues include His-315 and Asp-326.

Belongs to the peptidase M35 family. It depends on Zn(2+) as a cofactor.

Its subcellular location is the secreted. It catalyses the reaction Preferential cleavage of bonds with hydrophobic residues in P1'. Also 3-Asn-|-Gln-4 and 8-Gly-|-Ser-9 bonds in insulin B chain.. In terms of biological role, secreted metalloproteinase that allows assimilation of proteinaceous substrates. Shows high activities on basic nuclear substrates such as histone and protamine. May be involved in virulence. The protein is Neutral protease 2 homolog ARB_04336 of Arthroderma benhamiae (strain ATCC MYA-4681 / CBS 112371) (Trichophyton mentagrophytes).